The sequence spans 296 residues: 5,10-methylenetetrahydrofolate reductase (296 aa).

Glu28 serves as the catalytic Proton donor/acceptor. Residue Thr59 coordinates NADH. 14 residues coordinate FAD: Tyr60, Ala62, His88, Arg118, Gly119, Asp120, Ala132, Tyr152, His156, Ala159, Asp165, Asn168, Arg171, and Lys172. Asp120 serves as a coordination point for (6S)-5-methyl-5,6,7,8-tetrahydrofolate. Position 183 (Gln183) interacts with NADH. (6S)-5-methyl-5,6,7,8-tetrahydrofolate contacts are provided by Gln183, Gln219, and Arg279.

It belongs to the methylenetetrahydrofolate reductase family. FAD serves as cofactor.

The enzyme catalyses (6S)-5-methyl-5,6,7,8-tetrahydrofolate + NAD(+) = (6R)-5,10-methylene-5,6,7,8-tetrahydrofolate + NADH + H(+). It functions in the pathway one-carbon metabolism; tetrahydrofolate interconversion. The protein operates within amino-acid biosynthesis; L-methionine biosynthesis via de novo pathway. In terms of biological role, catalyzes the NADH-dependent reduction of 5,10-methylenetetrahydrofolate to 5-methyltetrahydrofolate. Is required to provide the methyl group necessary for methionine synthetase to convert homocysteine to methionine; the methyl group is given by 5-methyltetrahydrofolate. The chain is 5,10-methylenetetrahydrofolate reductase (metF) from Salmonella typhimurium (strain LT2 / SGSC1412 / ATCC 700720).